The following is a 1448-amino-acid chain: ABC transporter G family member 9 (1448 aa).

Positions 16–28 are enriched in polar residues; that stretch reads EGGSNLNINTPSG. The interval 16–41 is disordered; that stretch reads EGGSNLNINTPSGMSDGDFNSGANSP. Residues 136 to 385 enclose the ABC transporter 1 domain; it reads LFKPSTWKIE…FLDLGFDCEP (250 aa). The region spanning 490–717 is the ABC transmembrane type-2 1 domain; that stretch reads WGDKFSLVSR…APYDNSVRVC (228 aa). Helical transmembrane passes span 494 to 514, 530 to 550, 579 to 599, 604 to 624, 634 to 654, 663 to 683, and 748 to 768; these read FSLVSRYLSVIIQSFVYGSVF, AIFAAILFNAFLSEGELFATF, IPLTTVQVFLFSIVVYFMFGL, GKFFIFCFTLIGATLATTNMF, LYVSQNVMTGILIFMISYCGY, PWFGWFFWANPFTYAFKALMA, and LNIFITYLWWVLFIIINMVAV. An ABC transporter 2 domain is found at 822–1066; the sequence is FTWENIKYTV…LTSYFERQGV (245 aa). 858 to 865 serves as a coordination point for ATP; that stretch reads GSSGAGKT. Helical transmembrane passes span 1157–1177, 1191–1211, 1233–1253, 1272–1292, 1299–1319, and 1422–1442; these read FYAYGSILQAVMTGIIVGFTF, IFFIFQALLLGILLIFVVMVQ, FAISIVLVEIPYTIVCGSVFF, FYFWIIFIIYLFFCVSFGGAI, MFLAMTLVPLLIVFLFLFCGV, and IAILIAFWMFNIFLVVSFVYL. Residues 1157-1389 form the ABC transmembrane type-2 2 domain; the sequence is FYAYGSILQA…VPATGYVTNT (233 aa).

It belongs to the ABC transporter superfamily. ABCG family. PDR (TC 3.A.1.205) subfamily.

Its subcellular location is the membrane. The sequence is that of ABC transporter G family member 9 (abcG9) from Dictyostelium discoideum (Social amoeba).